We begin with the raw amino-acid sequence, 37 residues long: MKINASVRKICEKCRLIRRRGRIIVICFNPKHKQRQG.

Belongs to the bacterial ribosomal protein bL36 family.

It is found in the plastid. The protein resides in the chloroplast. The sequence is that of Large ribosomal subunit protein bL36c from Phaseolus angularis (Azuki bean).